A 327-amino-acid chain; its full sequence is GMP reductase (327 aa).

Cys176 acts as the Thioimidate intermediate in catalysis. 205–228 contacts NADP(+); that stretch reads IIADGGIRTHGDIAKSIRFGASMV.

The protein belongs to the IMPDH/GMPR family. GuaC type 2 subfamily.

It catalyses the reaction IMP + NH4(+) + NADP(+) = GMP + NADPH + 2 H(+). Functionally, catalyzes the irreversible NADPH-dependent deamination of GMP to IMP. It functions in the conversion of nucleobase, nucleoside and nucleotide derivatives of G to A nucleotides, and in maintaining the intracellular balance of A and G nucleotides. In Streptococcus agalactiae serotype Ia (strain ATCC 27591 / A909 / CDC SS700), this protein is GMP reductase.